Consider the following 111-residue polypeptide: Protein EARLY FLOWERING 4 (111 aa).

The interval 1–26 is disordered; it reads MKRNGETKRRRNVAEEAEQGEDPAMW. Serine 45 is subject to Phosphoserine. Residues 90–111 are disordered; that stretch reads FSSGFHGGKNGHDGGGAAGTRA. The segment covering 94 to 111 has biased composition (gly residues); sequence FHGGKNGHDGGGAAGTRA.

It belongs to the EARLY FLOWERING 4 family. Homodimer. Interacts with ELF3.

The protein localises to the nucleus. Component of the central CCA1/LHY-TOC1 feedback loop in the circadian clock that promotes clock accuracy and is required for sustained rhythms in the absence of daily light/dark cycles. Part of a corepressor complex consisting of ELF4, ELF3, and LUX involved in the transcriptional regulation of APRR9. Increases ELF3 nuclear distribution and localization in nuclear bodies. Required for responsiveness to continuous red, by regulating phytochrome B (phyB) signaling (including during seedling de-etiolation) and gene expression. Mediates both entrainment to an environmental cycle and circadian rhythm sustainability under constant conditions. Controls flowering time. Necessary for light-induced expression of both CCA1 and LHY. The chain is Protein EARLY FLOWERING 4 (ELF4) from Arabidopsis thaliana (Mouse-ear cress).